The following is a 308-amino-acid chain: 4-hydroxy-3-methylbut-2-enyl diphosphate reductase 2 (308 aa).

Residue cysteine 12 participates in [4Fe-4S] cluster binding. (2E)-4-hydroxy-3-methylbut-2-enyl diphosphate-binding residues include histidine 41 and histidine 74. Residues histidine 41 and histidine 74 each coordinate dimethylallyl diphosphate. Isopentenyl diphosphate-binding residues include histidine 41 and histidine 74. Cysteine 96 provides a ligand contact to [4Fe-4S] cluster. Residue histidine 124 participates in (2E)-4-hydroxy-3-methylbut-2-enyl diphosphate binding. Residue histidine 124 participates in dimethylallyl diphosphate binding. Histidine 124 lines the isopentenyl diphosphate pocket. The Proton donor role is filled by glutamate 126. Residue threonine 164 coordinates (2E)-4-hydroxy-3-methylbut-2-enyl diphosphate. Cysteine 194 contacts [4Fe-4S] cluster. 4 residues coordinate (2E)-4-hydroxy-3-methylbut-2-enyl diphosphate: serine 222, serine 223, asparagine 224, and serine 266. 4 residues coordinate dimethylallyl diphosphate: serine 222, serine 223, asparagine 224, and serine 266. Residues serine 222, serine 223, asparagine 224, and serine 266 each contribute to the isopentenyl diphosphate site.

This sequence belongs to the IspH family. The cofactor is [4Fe-4S] cluster.

The enzyme catalyses isopentenyl diphosphate + 2 oxidized [2Fe-2S]-[ferredoxin] + H2O = (2E)-4-hydroxy-3-methylbut-2-enyl diphosphate + 2 reduced [2Fe-2S]-[ferredoxin] + 2 H(+). The catalysed reaction is dimethylallyl diphosphate + 2 oxidized [2Fe-2S]-[ferredoxin] + H2O = (2E)-4-hydroxy-3-methylbut-2-enyl diphosphate + 2 reduced [2Fe-2S]-[ferredoxin] + 2 H(+). It participates in isoprenoid biosynthesis; dimethylallyl diphosphate biosynthesis; dimethylallyl diphosphate from (2E)-4-hydroxy-3-methylbutenyl diphosphate: step 1/1. It functions in the pathway isoprenoid biosynthesis; isopentenyl diphosphate biosynthesis via DXP pathway; isopentenyl diphosphate from 1-deoxy-D-xylulose 5-phosphate: step 6/6. In terms of biological role, catalyzes the conversion of 1-hydroxy-2-methyl-2-(E)-butenyl 4-diphosphate (HMBPP) into a mixture of isopentenyl diphosphate (IPP) and dimethylallyl diphosphate (DMAPP). Acts in the terminal step of the DOXP/MEP pathway for isoprenoid precursor biosynthesis. The sequence is that of 4-hydroxy-3-methylbut-2-enyl diphosphate reductase 2 from Bradyrhizobium diazoefficiens (strain JCM 10833 / BCRC 13528 / IAM 13628 / NBRC 14792 / USDA 110).